The chain runs to 104 residues: Large ribosomal subunit protein uL24 (104 aa).

Belongs to the universal ribosomal protein uL24 family. In terms of assembly, part of the 50S ribosomal subunit.

In terms of biological role, one of two assembly initiator proteins, it binds directly to the 5'-end of the 23S rRNA, where it nucleates assembly of the 50S subunit. Its function is as follows. One of the proteins that surrounds the polypeptide exit tunnel on the outside of the subunit. This chain is Large ribosomal subunit protein uL24, found in Buchnera aphidicola subsp. Baizongia pistaciae (strain Bp).